Consider the following 185-residue polypeptide: Protein GrpE (185 aa).

Polar residues predominate over residues 1-11 (MENTQENPTDQ). The segment at 1-38 (MENTQENPTDQTTEETGREAQAAEPAAQAAENAAPAAE) is disordered. The segment covering 19–38 (EAQAAEPAAQAAENAAPAAE) has biased composition (low complexity).

It belongs to the GrpE family. As to quaternary structure, homodimer.

It localises to the cytoplasm. Its function is as follows. Participates actively in the response to hyperosmotic and heat shock by preventing the aggregation of stress-denatured proteins, in association with DnaK and GrpE. It is the nucleotide exchange factor for DnaK and may function as a thermosensor. Unfolded proteins bind initially to DnaJ; upon interaction with the DnaJ-bound protein, DnaK hydrolyzes its bound ATP, resulting in the formation of a stable complex. GrpE releases ADP from DnaK; ATP binding to DnaK triggers the release of the substrate protein, thus completing the reaction cycle. Several rounds of ATP-dependent interactions between DnaJ, DnaK and GrpE are required for fully efficient folding. This chain is Protein GrpE, found in Burkholderia mallei (strain NCTC 10247).